We begin with the raw amino-acid sequence, 135 residues long: Mediator of RNA polymerase II transcription subunit 10 (135 aa).

It belongs to the Mediator complex subunit 10 family. Component of the Mediator complex, which is composed of MED1, MED4, MED6, MED7, MED8, MED9, MED10, MED11, MED12, MED13, MED13L, MED14, MED15, MED16, MED17, MED18, MED19, MED20, MED21, MED22, MED23, MED24, MED25, MED26, MED27, MED29, MED30, MED31, CCNC, CDK8 and CDC2L6/CDK11. The MED12, MED13, CCNC and CDK8 subunits form a distinct module termed the CDK8 module. Mediator containing the CDK8 module is less active than Mediator lacking this module in supporting transcriptional activation. Individual preparations of the Mediator complex lacking one or more distinct subunits have been variously termed ARC, CRSP, DRIP, PC2, SMCC and TRAP.

The protein resides in the nucleus. Functionally, component of the Mediator complex, a coactivator involved in the regulated transcription of nearly all RNA polymerase II-dependent genes. Mediator functions as a bridge to convey information from gene-specific regulatory proteins to the basal RNA polymerase II transcription machinery. Mediator is recruited to promoters by direct interactions with regulatory proteins and serves as a scaffold for the assembly of a functional preinitiation complex with RNA polymerase II and the general transcription factors. The sequence is that of Mediator of RNA polymerase II transcription subunit 10 (MED10) from Macaca fascicularis (Crab-eating macaque).